The following is a 473-amino-acid chain: RUN domain-containing protein 3B (473 aa).

The interval 1–24 (MASRSLGGLSGIRGGGGGGGKKSL) is disordered. Over residues 8–21 (GLSGIRGGGGGGGK) the composition is skewed to gly residues. Arg-13 bears the Omega-N-methylarginine mark. One can recognise an RUN domain in the interval 57-206 (DDSSPEFNNF…IDFSFCLKGE (150 aa)). Residues Ser-232 and Ser-233 each carry the phosphoserine modification. The stretch at 317–342 (AHKLEKEQLEYIIVELQDQLTVLKNN) forms a coiled coil. Residues 399 to 422 (SLSQTSLDPGQSQEGDGKQDTLNV) show a composition bias toward polar residues. Positions 399 to 428 (SLSQTSLDPGQSQEGDGKQDTLNVMSEGKE) are disordered.

The protein belongs to the RUNDC3 family. Interacts with RAP2A. In terms of tissue distribution, isoform 2 is expressed at high levels in brain, thymus, ovary, testis, leukocyte, liver, small intestine and prostate. Isoform 1 is expressed in the brain, testis and adrenal gland. It is activated in tumorigenic breast cancer cell lines and in the primary tumor of breast cancer patients. Activation also correlates with metastatic lymph node invasion and can be detected in metastatic epithelial cells from the lymph nodes and in the bone marrow of patients.

The chain is RUN domain-containing protein 3B (RUNDC3B) from Homo sapiens (Human).